Consider the following 482-residue polypeptide: UDP-N-acetylmuramoyl-L-alanyl-D-glutamate--2,6-diaminopimelate ligase (482 aa).

Position 29 (Ser29) interacts with UDP-N-acetyl-alpha-D-muramoyl-L-alanyl-D-glutamate. 109–115 (GTNGKTS) contributes to the ATP binding site. UDP-N-acetyl-alpha-D-muramoyl-L-alanyl-D-glutamate contacts are provided by residues 151-152 (TT), Ser178, and Arg186. N6-carboxylysine is present on Lys218. Meso-2,6-diaminopimelate contacts are provided by residues Arg375, 399–402 (DNPR), Gly451, and Glu455. The Meso-diaminopimelate recognition motif signature appears at 399–402 (DNPR).

It belongs to the MurCDEF family. MurE subfamily. Requires Mg(2+) as cofactor. Carboxylation is probably crucial for Mg(2+) binding and, consequently, for the gamma-phosphate positioning of ATP.

The protein localises to the cytoplasm. The enzyme catalyses UDP-N-acetyl-alpha-D-muramoyl-L-alanyl-D-glutamate + meso-2,6-diaminopimelate + ATP = UDP-N-acetyl-alpha-D-muramoyl-L-alanyl-gamma-D-glutamyl-meso-2,6-diaminopimelate + ADP + phosphate + H(+). The protein operates within cell wall biogenesis; peptidoglycan biosynthesis. Catalyzes the addition of meso-diaminopimelic acid to the nucleotide precursor UDP-N-acetylmuramoyl-L-alanyl-D-glutamate (UMAG) in the biosynthesis of bacterial cell-wall peptidoglycan. The polypeptide is UDP-N-acetylmuramoyl-L-alanyl-D-glutamate--2,6-diaminopimelate ligase (Caldanaerobacter subterraneus subsp. tengcongensis (strain DSM 15242 / JCM 11007 / NBRC 100824 / MB4) (Thermoanaerobacter tengcongensis)).